The primary structure comprises 852 residues: Metastasis-associated in colon cancer protein 1 (852 aa).

Phosphoserine is present on serine 19. The 138-residue stretch at 212-349 (VTIACKVNHQ…LSQVMYLVVA (138 aa)) folds into the ZU5 domain. The region spanning 549-619 (NFSNYGVTLK…HCKNVKVISK (71 aa)) is the SH3 domain.

In terms of assembly, interacts with FASLG. Preferentially expressed in metastasizing tumors.

The protein localises to the cytoplasm. The protein resides in the nucleus. In terms of biological role, acts as a transcription activator for MET and as a key regulator of HGF-MET signaling. Promotes cell motility, proliferation and hepatocyte growth factor (HGF)-dependent scattering in vitro and tumor growth and metastasis in vivo. The polypeptide is Metastasis-associated in colon cancer protein 1 (MACC1) (Homo sapiens (Human)).